We begin with the raw amino-acid sequence, 418 residues long: Equilibrative nucleotide transporter 4 (418 aa).

Transmembrane regions (helical) follow at residues 20-40, 54-74, 85-105, 108-128, 147-169, 186-206, 264-284, 291-311, 326-346, 353-373, and 392-412; these read MVVC…MLTI, SRVF…ILAY, ILTG…LDLT, GHGG…FGLA, LIQS…RLIT, IFLA…AYVF, HAVN…GFLY, GLGD…DLFG, KALT…YFTA, WMIM…VCIM, and LVVF…LWLI.

This sequence belongs to the SLC29A/ENT transporter (TC 2.A.57) family. Expressed in leaves and at lowe levels in stems and flowers.

Its subcellular location is the cell membrane. Its function is as follows. Nucleoside transporter that can mediate uptake of adenosine, uridine, guanosine or cytidine when expressed in a heterologous system (yeast). This Arabidopsis thaliana (Mouse-ear cress) protein is Equilibrative nucleotide transporter 4 (ENT4).